Consider the following 266-residue polypeptide: MLVCNYTQKRVDMMWDAIAYNDSRKYAFMTVNARWIHADRYFDTSAQLYSYIVQNKVSDVHVKPLDDGGGREWVVDADYKNYVDEHDLMLKIYIGATAFLLFYTEENVSRVMYTGNRGFHLWLKFTDKFKITSAQNVRVHRYKAFEKPAKLDSDYIQPGSFAHCVREAVRLYVPHMQDSNLDALTLQYWPDVDRDIFCNVNKQIRAPYSYNYKGTKFSRCITKELLDKLKQCYPGYGTGGCGPVTTTTTPSPPKIGSMQTTTKSTT.

The tract at residues 244–266 (VTTTTTPSPPKIGSMQTTTKSTT) is disordered. A compositionally biased stretch (polar residues) spans 257–266 (SMQTTTKSTT).

Belongs to the baculoviridae LEF-1 family. Interacts with LEF-2.

Plays an essential role in viral DNA replication. May generates single-stranded DNA for both leading and lagging strand synthesis. The primase initiates primer synthesis and thereby produces large amount of short RNA primers on the lagging strand that the polymerase elongates using dNTPs. The sequence is that of DNA primase (LEF-1) from Autographa californica nuclear polyhedrosis virus (AcMNPV).